The primary structure comprises 94 residues: Co-chaperonin GroES (94 aa).

This sequence belongs to the GroES chaperonin family. Heptamer of 7 subunits arranged in a ring. Interacts with the chaperonin GroEL.

The protein localises to the cytoplasm. Functionally, together with the chaperonin GroEL, plays an essential role in assisting protein folding. The GroEL-GroES system forms a nano-cage that allows encapsulation of the non-native substrate proteins and provides a physical environment optimized to promote and accelerate protein folding. GroES binds to the apical surface of the GroEL ring, thereby capping the opening of the GroEL channel. In Clostridium perfringens (strain ATCC 13124 / DSM 756 / JCM 1290 / NCIMB 6125 / NCTC 8237 / Type A), this protein is Co-chaperonin GroES.